A 914-amino-acid chain; its full sequence is Isoleucine--tRNA ligase (914 aa).

The short motif at 57-67 (PYANGQIHMGH) is the 'HIGH' region element. E554 is an L-isoleucyl-5'-AMP binding site. The short motif at 595–599 (KMSKS) is the 'KMSKS' region element. K598 contributes to the ATP binding site. Zn(2+) is bound by residues C883, C886, C904, and C907.

This sequence belongs to the class-I aminoacyl-tRNA synthetase family. IleS type 1 subfamily. In terms of assembly, monomer. Zn(2+) is required as a cofactor.

The protein localises to the cytoplasm. It catalyses the reaction tRNA(Ile) + L-isoleucine + ATP = L-isoleucyl-tRNA(Ile) + AMP + diphosphate. Functionally, catalyzes the attachment of isoleucine to tRNA(Ile). As IleRS can inadvertently accommodate and process structurally similar amino acids such as valine, to avoid such errors it has two additional distinct tRNA(Ile)-dependent editing activities. One activity is designated as 'pretransfer' editing and involves the hydrolysis of activated Val-AMP. The other activity is designated 'posttransfer' editing and involves deacylation of mischarged Val-tRNA(Ile). The protein is Isoleucine--tRNA ligase of Macrococcus caseolyticus (strain JCSC5402) (Macrococcoides caseolyticum).